We begin with the raw amino-acid sequence, 245 residues long: MILFPAIDLKNGQCVRLEQGDMARATVFNLDPAAQAQSFAAQGFQYLHVVDLDGAFAGKPMNAQAVEAMLKVVSMPVQLGGGIRDLKTIEAWLSKGIARVIIGTAAVRDPALVKEAAKAFPGRVAVGLDARDGNVAVEGWAESSQVTALDIAQRFEDAGVAAIIFTDIARDGLLKGINWDATIALAEAISIPVIASGGLASIEDVRTLLSPRAKKLEGAIAGRALYDGRLDPTEALALIGAAKAA.

D8 functions as the Proton acceptor in the catalytic mechanism. Catalysis depends on D129, which acts as the Proton donor.

This sequence belongs to the HisA/HisF family.

Its subcellular location is the cytoplasm. The catalysed reaction is 1-(5-phospho-beta-D-ribosyl)-5-[(5-phospho-beta-D-ribosylamino)methylideneamino]imidazole-4-carboxamide = 5-[(5-phospho-1-deoxy-D-ribulos-1-ylimino)methylamino]-1-(5-phospho-beta-D-ribosyl)imidazole-4-carboxamide. It functions in the pathway amino-acid biosynthesis; L-histidine biosynthesis; L-histidine from 5-phospho-alpha-D-ribose 1-diphosphate: step 4/9. The polypeptide is 1-(5-phosphoribosyl)-5-[(5-phosphoribosylamino)methylideneamino] imidazole-4-carboxamide isomerase (Rhodopseudomonas palustris (strain ATCC BAA-98 / CGA009)).